Reading from the N-terminus, the 188-residue chain is Photosystem I assembly protein Ycf4 (188 aa).

The next 2 helical transmembrane spans lie at 26–46 (YFWA…GLSS) and 68–88 (LVMG…WFVI).

Belongs to the Ycf4 family.

The protein resides in the cellular thylakoid membrane. Seems to be required for the assembly of the photosystem I complex. This chain is Photosystem I assembly protein Ycf4, found in Synechococcus sp. (strain ATCC 27144 / PCC 6301 / SAUG 1402/1) (Anacystis nidulans).